A 98-amino-acid polypeptide reads, in one-letter code: Large ribosomal subunit protein uL23 (98 aa).

It belongs to the universal ribosomal protein uL23 family. In terms of assembly, part of the 50S ribosomal subunit. Contacts protein L29, and trigger factor when it is bound to the ribosome.

In terms of biological role, one of the early assembly proteins it binds 23S rRNA. One of the proteins that surrounds the polypeptide exit tunnel on the outside of the ribosome. Forms the main docking site for trigger factor binding to the ribosome. This chain is Large ribosomal subunit protein uL23, found in Clostridium beijerinckii (strain ATCC 51743 / NCIMB 8052) (Clostridium acetobutylicum).